Here is a 665-residue protein sequence, read N- to C-terminus: Soluble lamin-associated protein of 75 kDa (665 aa).

A disordered region spans residues 309–665 (AFASTSEGPE…GPGKKKAKLT (357 aa)). The segment covering 311 to 326 (ASTSEGPEKTPVSTRT) has biased composition (polar residues). The span at 327–338 (RSSHLKRPKIGK) shows a compositional bias: basic residues. S348 and S377 each carry phosphoserine. Acidic residues predominate over residues 376–397 (SSEEFLEEEPEQGVIDFEDESG). Positions 412–421 (QKQDGDKDSA) are enriched in basic and acidic residues. Residues 440-451 (TEDEDSTSEGLE) are compositionally biased toward acidic residues. A phosphoserine mark is found at S447 and S512. 2 stretches are compositionally biased toward polar residues: residues 521-533 (LGSS…VSNI) and 553-566 (VSQN…SSVE). Residues S610, S613, and S630 each carry the phosphoserine modification. The span at 646–665 (NLRRKAKGHKGPGKKKAKLT) shows a compositional bias: basic residues.

The protein belongs to the FAM169 family.

It is found in the nucleus envelope. The protein resides in the nucleus inner membrane. This is Soluble lamin-associated protein of 75 kDa (Fam169a) from Mus musculus (Mouse).